A 641-amino-acid polypeptide reads, in one-letter code: Choline O-acetyltransferase (641 aa).

The interval methionine 1 to valine 29 is disordered. At serine 17 the chain carries Phosphoserine. Histidine 335 functions as the Proton acceptor in the catalytic mechanism. A Phosphoserine modification is found at serine 366. Residues glycine 413–aspartate 425, serine 451, and glutamine 552 each bind CoA. The tract at residues glutamine 619 to proline 641 is disordered.

This sequence belongs to the carnitine/choline acetyltransferase family.

The enzyme catalyses choline + acetyl-CoA = acetylcholine + CoA. In terms of biological role, catalyzes the reversible synthesis of acetylcholine (ACh) from acetyl CoA and choline at cholinergic synapses. The chain is Choline O-acetyltransferase (CHAT) from Sus scrofa (Pig).